The primary structure comprises 961 residues: Exportin-T (961 aa).

Belongs to the exportin family.

The protein resides in the cytoplasm. It localises to the nucleus. Mediates the nuclear export of aminoacylated tRNAs. The protein is Exportin-T (xpot) of Danio rerio (Zebrafish).